A 496-amino-acid polypeptide reads, in one-letter code: Lysine--tRNA ligase (496 aa).

The Mg(2+) site is built by glutamate 409 and glutamate 416.

It belongs to the class-II aminoacyl-tRNA synthetase family. Homodimer. Mg(2+) serves as cofactor.

It localises to the cytoplasm. It carries out the reaction tRNA(Lys) + L-lysine + ATP = L-lysyl-tRNA(Lys) + AMP + diphosphate. This chain is Lysine--tRNA ligase, found in Streptococcus gordonii (strain Challis / ATCC 35105 / BCRC 15272 / CH1 / DL1 / V288).